The sequence spans 757 residues: Cartilage oligomeric matrix protein (757 aa).

The first 20 residues, 1–20 (MVPDTACVLLLTLAALGASG), serve as a signal peptide directing secretion. Residues 22 to 86 (GQSPLGSDLG…SVRTGLPSVR (65 aa)) form a COMP N-terminal region. The EGF-like 1 domain occupies 87–126 (PLLHCAPGFCFPGVACIQTESGARCGPCPAGFTGNGSHCT). 21 disulfide bridges follow: cysteine 91/cysteine 102, cysteine 96/cysteine 111, cysteine 114/cysteine 125, cysteine 131/cysteine 142, cysteine 136/cysteine 151, cysteine 154/cysteine 178, cysteine 184/cysteine 197, cysteine 191/cysteine 206, cysteine 209/cysteine 221, cysteine 229/cysteine 243, cysteine 237/cysteine 253, cysteine 255/cysteine 266, cysteine 282/cysteine 287, cysteine 292/cysteine 312, cysteine 328/cysteine 348, cysteine 351/cysteine 371, cysteine 387/cysteine 407, cysteine 410/cysteine 430, cysteine 448/cysteine 468, cysteine 484/cysteine 504, and cysteine 520/cysteine 741. Residue asparagine 121 is glycosylated (N-linked (GlcNAc...) asparagine). Positions 127-179 (DVNECNAHPCFPRVRCINTSPGFRCEACPPGYSGPTHQGVGLAFAKANKQVCT) constitute an EGF-like 2; calcium-binding domain. Residues 180 to 222 (DINECETGQHNCVPNSVCINTRGSFQCGPCQPGFVGDQASGCQ) form the EGF-like 3; calcium-binding domain. Residues 225–267 (AQRFCPDGSPSECHEHADCVLERDGSRSCVCAVGWAGNGILCG) enclose the EGF-like 4 domain. TSP type-3 repeat units follow at residues 268-300 (RDTD…NSGQ), 301-336 (EDVD…NPDQ), 337-359 (RNTD…NDDQ), 360-395 (KDTD…NSDQ), 396-418 (KDSD…NPDQ), 419-456 (ADVD…NSAQ), 457-492 (EDSD…NPGQ), and 493-528 (EDAD…EVTL). The tract at residues 298-503 (SGQEDVDRDG…DADRDGVGDV (206 aa)) is disordered. Composition is skewed to basic and acidic residues over residues 334–346 (PDQR…KWGD) and 352–370 (RSQK…RGDA). The Cell attachment site signature appears at 367–369 (RGD). Residues 467-476 (ACDDDDDNDG) are compositionally biased toward acidic residues. The interval 527-757 (TLTDFRAFQT…DYETHQLRQA (231 aa)) is mediates cell survival and induction of the IAP family of survival proteins. Positions 532–746 (RAFQTVVLDP…LRYRCNDTIP (215 aa)) constitute a TSP C-terminal domain. The N-linked (GlcNAc...) asparagine glycan is linked to asparagine 742.

This sequence belongs to the thrombospondin family. Pentamer; disulfide-linked. Exists in a more compact conformation in the presence of calcium and shows a more extended conformation in the absence of calcium. Interacts with ITGB3, ITGA5 and FN1. Binding to FN1 requires the presence of divalent cations (Ca(2+), Mg(2+) or Mn(2+)). The greatest amount of binding is seen in the presence of Mn(2+). Interacts with MATN1, MATN3, MATN4 and ACAN. Binds heparin, heparan sulfate and chondroitin sulfate. EDTA dimishes significantly its binding to ACAN and abolishes its binding to MATN3, MATN4 and chondroitin sulfate. Interacts with collagen I, II and IX, and interaction with these collagens is dependent on the presence of zinc ions. Interacts with ADAMTS12. Interacts with ITGA7. Requires Ca(2+) as cofactor. In terms of processing, proteolytically cleaved by metalloproteases ADAMTS4 and ADAMTS1 with ADAMTS4 showing more potent activity. Abundantly expressed in the chondrocyte extracellular matrix, and is also found in bone, tendon, ligament and synovium and blood vessels. Increased amounts are produced during late stages of osteoarthritis in the area adjacent to the main defect.

Its subcellular location is the secreted. It localises to the extracellular space. It is found in the extracellular matrix. In terms of biological role, plays a role in the structural integrity of cartilage via its interaction with other extracellular matrix proteins such as the collagens and fibronectin. Can mediate the interaction of chondrocytes with the cartilage extracellular matrix through interaction with cell surface integrin receptors. Could play a role in the pathogenesis of osteoarthritis. Potent suppressor of apoptosis in both primary chondrocytes and transformed cells. Suppresses apoptosis by blocking the activation of caspase-3 and by inducing the IAP family of survival proteins (BIRC3, BIRC2, BIRC5 and XIAP). Essential for maintaining a vascular smooth muscle cells (VSMCs) contractile/differentiated phenotype under physiological and pathological stimuli. Maintains this phenotype of VSMCs by interacting with ITGA7. In Homo sapiens (Human), this protein is Cartilage oligomeric matrix protein.